Consider the following 354-residue polypeptide: NADH-quinone oxidoreductase subunit H (354 aa).

Transmembrane regions (helical) follow at residues 25 to 45 (LVRILVVAVVILLCVAYLILW), 91 to 111 (WIYMVAPIMVVVPAFAVWAVI), 126 to 146 (LLYAMAVSSIGVYGVILAGWA), 170 to 190 (MGFALVVVLMTAGTLNLSGIV), 205 to 225 (FLSWNWLPLLPMFVVYFISGI), 267 to 287 (IVISALAATLFLGGWSAPFGF), 290 to 310 (FIPGIVWLVAKVFFLLSVFIW), and 330 to 350 (IFIPVCVVWLVVVGFWIMSPL).

It belongs to the complex I subunit 1 family. NDH-1 is composed of 14 different subunits. Subunits NuoA, H, J, K, L, M, N constitute the membrane sector of the complex.

The protein localises to the cell inner membrane. It carries out the reaction a quinone + NADH + 5 H(+)(in) = a quinol + NAD(+) + 4 H(+)(out). In terms of biological role, NDH-1 shuttles electrons from NADH, via FMN and iron-sulfur (Fe-S) centers, to quinones in the respiratory chain. The immediate electron acceptor for the enzyme in this species is believed to be ubiquinone. Couples the redox reaction to proton translocation (for every two electrons transferred, four hydrogen ions are translocated across the cytoplasmic membrane), and thus conserves the redox energy in a proton gradient. This subunit may bind ubiquinone. The chain is NADH-quinone oxidoreductase subunit H from Paraburkholderia xenovorans (strain LB400).